We begin with the raw amino-acid sequence, 418 residues long: UDP-N-acetylglucosamine 1-carboxyvinyltransferase (418 aa).

A phosphoenolpyruvate-binding site is contributed by 22–23 (KN). A UDP-N-acetyl-alpha-D-glucosamine-binding site is contributed by R92. Residue C116 is the Proton donor of the active site. 2-(S-cysteinyl)pyruvic acid O-phosphothioketal is present on C116. UDP-N-acetyl-alpha-D-glucosamine is bound by residues D306 and I328.

The protein belongs to the EPSP synthase family. MurA subfamily.

The protein resides in the cytoplasm. The enzyme catalyses phosphoenolpyruvate + UDP-N-acetyl-alpha-D-glucosamine = UDP-N-acetyl-3-O-(1-carboxyvinyl)-alpha-D-glucosamine + phosphate. The protein operates within cell wall biogenesis; peptidoglycan biosynthesis. Its function is as follows. Cell wall formation. Adds enolpyruvyl to UDP-N-acetylglucosamine. This Shewanella amazonensis (strain ATCC BAA-1098 / SB2B) protein is UDP-N-acetylglucosamine 1-carboxyvinyltransferase.